The primary structure comprises 405 residues: Tyrosine--tRNA ligase (405 aa).

Residue Tyr-35 participates in L-tyrosine binding. Residues 40 to 49 carry the 'HIGH' region motif; sequence TTSSSLHIGH. Residues Tyr-166 and Gln-170 each contribute to the L-tyrosine site. The short motif at 226-230 is the 'KMSKS' region element; that stretch reads KMGKS. Lys-229 lines the ATP pocket. The 65-residue stretch at 340-404 folds into the S4 RNA-binding domain; sequence ILLIDLMLDS…VGKKKFLRIV (65 aa).

Belongs to the class-I aminoacyl-tRNA synthetase family. TyrS type 1 subfamily. As to quaternary structure, homodimer.

It localises to the cytoplasm. It carries out the reaction tRNA(Tyr) + L-tyrosine + ATP = L-tyrosyl-tRNA(Tyr) + AMP + diphosphate + H(+). Its function is as follows. Catalyzes the attachment of tyrosine to tRNA(Tyr) in a two-step reaction: tyrosine is first activated by ATP to form Tyr-AMP and then transferred to the acceptor end of tRNA(Tyr). The polypeptide is Tyrosine--tRNA ligase (Borrelia garinii subsp. bavariensis (strain ATCC BAA-2496 / DSM 23469 / PBi) (Borreliella bavariensis)).